A 224-amino-acid polypeptide reads, in one-letter code: Putative gastrointestinal growth factor xP4 (224 aa).

Residues 1 to 17 form the signal peptide; it reads MANSVFWAIAVALVLGA. P-type domains lie at 25–68, 73–117, 123–167, and 173–216; these read YRCG…YTPW, TICN…YQPI, RDCS…FKPE, and LQCA…FYPD. 12 disulfide bridges follow: Cys-27-Cys-53, Cys-37-Cys-52, Cys-47-Cys-64, Cys-75-Cys-102, Cys-86-Cys-101, Cys-96-Cys-113, Cys-125-Cys-152, Cys-136-Cys-151, Cys-146-Cys-163, Cys-175-Cys-201, Cys-185-Cys-200, and Cys-195-Cys-212. An N-linked (GlcNAc...) asparagine glycan is attached at Asn-104.

In terms of processing, glycosylated. As to expression, stomach mucosa.

It localises to the secreted. May act as a growth factor. The sequence is that of Putative gastrointestinal growth factor xP4 (p4) from Xenopus laevis (African clawed frog).